The chain runs to 363 residues: Mitogen-activated protein kinase 12 (363 aa).

Positions 25–309 (YKDLKQVGTG…AAEALAFPFF (285 aa)) constitute a Protein kinase domain. ATP-binding positions include 31 to 39 (VGTGAYGTV) and lysine 54. Aspartate 151 acts as the Proton acceptor in catalysis. Threonine 181 carries the phosphothreonine modification. A TXY motif is present at residues 181 to 183 (TGY). Residue tyrosine 183 is modified to Phosphotyrosine.

The protein belongs to the protein kinase superfamily. CMGC Ser/Thr protein kinase family. MAP kinase subfamily. Requires Mg(2+) as cofactor. In terms of processing, dually phosphorylated on Thr-181 and Tyr-183, which activates the enzyme.

Its subcellular location is the cytoplasm. It catalyses the reaction L-seryl-[protein] + ATP = O-phospho-L-seryl-[protein] + ADP + H(+). It carries out the reaction L-threonyl-[protein] + ATP = O-phospho-L-threonyl-[protein] + ADP + H(+). With respect to regulation, activated by threonine and tyrosine phosphorylation. Its function is as follows. Serine/threonine kinase which acts as an essential component of the MAP kinase signal transduction pathway. MAPK12 is one of the four p38 MAPKs which play an important role in the cascades of cellular responses evoked by extracellular stimuli such as pro-inflammatory cytokines or physical stress leading to direct activation of transcription factors. Accordingly, p38 MAPKs phosphorylate a broad range of proteins and it has been estimated that they may have approximately 200 to 300 substrates each. Some of the targets are downstream kinases such as MAPKAPK2, which are activated through phosphorylation and further phosphorylate additional targets. This is Mitogen-activated protein kinase 12 (mapk12) from Danio rerio (Zebrafish).